We begin with the raw amino-acid sequence, 219 residues long: 2-phospho-L-lactate guanylyltransferase (219 aa).

The protein belongs to the CofC family. Homodimer.

The enzyme catalyses (2S)-2-phospholactate + GTP + H(+) = (2S)-lactyl-2-diphospho-5'-guanosine + diphosphate. It participates in cofactor biosynthesis; coenzyme F420 biosynthesis. Functionally, guanylyltransferase that catalyzes the activation of (2S)-2-phospholactate (2-PL) as (2S)-lactyl-2-diphospho-5'-guanosine, via the condensation of 2-PL with GTP. It is involved in the biosynthesis of coenzyme F420, a hydride carrier cofactor. The sequence is that of 2-phospho-L-lactate guanylyltransferase from Methanocella arvoryzae (strain DSM 22066 / NBRC 105507 / MRE50).